The following is a 194-amino-acid chain: Histone H1.0-A (194 aa).

Disordered regions lie at residues 1–29 (MTENSAPAAKPRRSKASKKSTDHPKYSDM) and 96–194 (ADEV…GRKK). Residues 22–95 (DHPKYSDMIL…GASGSFRLAK (74 aa)) form the H15 domain. Composition is skewed to basic residues over residues 102–164 (PAKK…KTVR) and 172–194 (KAKKAKPSKPKAKASPKKSGRKK).

This sequence belongs to the histone H1/H5 family.

Its subcellular location is the nucleus. It is found in the chromosome. Functionally, histones H1 are necessary for the condensation of nucleosome chains into higher-order structures. The histones H1.0 are found in cells that are in terminal stages of differentiation or that have low rates of cell division. The polypeptide is Histone H1.0-A (h1-0-a) (Xenopus laevis (African clawed frog)).